Here is a 1284-residue protein sequence, read N- to C-terminus: Collagen alpha-1(XX) chain (1284 aa).

An N-terminal signal peptide occupies residues 1–22 (MSSGDPAHLGLCLWLWLGATLG). The region spanning 28-119 (ASGLLRLAVL…EFVIEDLKSS (92 aa)) is the Fibronectin type-III 1 domain. A disordered region spans residues 122–171 (DRSSQRPLGSGAPEPTPSHTGSPDPEQASEPQVAFTPSQDPRTPAGPQFR). One can recognise a VWFA domain in the interval 179 to 354 (DMVFLVDGSW…GALAGLLSRL (176 aa)). Fibronectin type-III domains follow at residues 379–468 (APTS…APLP), 469–559 (PPRA…TLAP), 560–647 (PRHL…TKKA), 649–738 (SPSQ…TPST), and 743–833 (PPSN…ACPA). The N-linked (GlcNAc...) asparagine glycan is linked to asparagine 607. The region spanning 842–1037 (GFDLMVAFSL…LQMLQIVCSD (196 aa)) is the Laminin G-like domain. 2 disordered regions span residues 1065-1190 (SCSS…EKGE) and 1212-1284 (SFHE…GLWE). The span at 1071–1082 (PGPPGPQGPPGL) shows a compositional bias: pro residues. Collagen-like domains lie at 1071-1127 (PGPP…IPGR) and 1133-1190 (PKGM…EKGE). 2 stretches are compositionally biased toward low complexity: residues 1112-1125 (LPGL…QGIP) and 1166-1181 (ERGP…LPGP). The span at 1271 to 1284 (SPGQQGASTQGLWE) shows a compositional bias: polar residues.

High expression in heart, lung, liver, skeletal muscle, kidney, pancreas, spleen, testis, ovary, subthalamic nucleus and fetal liver. Weak expression in other tissues tested.

It localises to the secreted. Its subcellular location is the extracellular space. In terms of biological role, probable collagen protein. This Homo sapiens (Human) protein is Collagen alpha-1(XX) chain (COL20A1).